We begin with the raw amino-acid sequence, 341 residues long: Probable galacturonosyltransferase-like 2 (341 aa).

Topologically, residues 1 to 4 (MHSK) are cytoplasmic. The chain crosses the membrane as a helical; Signal-anchor for type II membrane protein span at residues 5–22 (FILYLSILAVFTVSFAGG). At 23 to 341 (ERFKEAPKFF…LESRFDLIES (319 aa)) the chain is on the lumenal side. Asn190 is a glycosylation site (N-linked (GlcNAc...) asparagine).

It belongs to the glycosyltransferase 8 family.

Its subcellular location is the golgi apparatus membrane. It functions in the pathway glycan metabolism; pectin biosynthesis. Functionally, may be involved in pectin and/or xylans biosynthesis in cell walls. In Arabidopsis thaliana (Mouse-ear cress), this protein is Probable galacturonosyltransferase-like 2 (GATL2).